A 739-amino-acid chain; its full sequence is Double-strand break repair protein mus-23 (739 aa).

Mn(2+) contacts are provided by Asp-16, His-18, Asp-56, and Asn-123. The Proton donor role is filled by His-124. Mn(2+) contacts are provided by His-212, His-240, and His-242. The interval 516 to 739 is disordered; that stretch reads FDAGQHKQAQ…KPGLLARRLG (224 aa). Positions 523–532 are enriched in basic residues; the sequence is QAQRTKRFKR. The segment covering 559–568 has biased composition (basic and acidic residues); the sequence is VEPKGNDRPT. Positions 599-636 are enriched in low complexity; the sequence is KRGAAAKTTAAAKKAAPGKKAAPAKKAAPAKKAAPAKK. Positions 637–646 are enriched in basic residues; it reads APARGRKKKT. The segment covering 650-686 has biased composition (acidic residues); it reads DSDEEEEEDYPEDDDEEEEEADEEEEDVIMEDDEEDP. Residues 694–722 are compositionally biased toward low complexity; the sequence is KATSRVASTRASARATPVRATPARATQAR.

This sequence belongs to the MRE11/RAD32 family. Component of the MRN complex composed of two heterodimers RAD50 and MRE11 associated with a single NBS1. It depends on Mn(2+) as a cofactor.

The protein resides in the nucleus. The protein localises to the chromosome. It localises to the telomere. Functionally, core component of the MRN complex, which plays a central role in double-strand break (DSB) repair, DNA recombination, maintenance of telomere integrity and meiosis. The MRN complex is involved in the repair of DNA double-strand breaks (DSBs) via homologous recombination (HR), an error-free mechanism which primarily occurs during S and G2 phases. The complex (1) mediates the end resection of damaged DNA, which generates proper single-stranded DNA, a key initial steps in HR, and is (2) required for the recruitment of other repair factors and efficient activation of ATM and ATR upon DNA damage. Within the MRN complex, MRE11 possesses both single-strand endonuclease activity and double-strand-specific 3'-5' exonuclease activity. MRE11 first endonucleolytically cleaves the 5' strand at DNA DSB ends to prevent non-homologous end joining (NHEJ) and licence HR. It then generates a single-stranded DNA gap via 3' to 5' exonucleolytic degradation, which is required for single-strand invasion and recombination. The MRN complex is also required for the processing of R-loops. The chain is Double-strand break repair protein mus-23 (mus-23) from Neurospora crassa (strain ATCC 24698 / 74-OR23-1A / CBS 708.71 / DSM 1257 / FGSC 987).